An 851-amino-acid polypeptide reads, in one-letter code: DNA mismatch repair protein MutS (851 aa).

602–609 contributes to the ATP binding site; it reads GPNMSGKS.

The protein belongs to the DNA mismatch repair MutS family.

This protein is involved in the repair of mismatches in DNA. It is possible that it carries out the mismatch recognition step. This protein has a weak ATPase activity. The protein is DNA mismatch repair protein MutS of Streptococcus pyogenes serotype M28 (strain MGAS6180).